We begin with the raw amino-acid sequence, 720 residues long: NAD(+) hydrolase ApTIR (720 aa).

Positions 1-131 (MRYDAFISYS…AVPPALRGVF (131 aa)) constitute a TIR domain. NAD(+)-binding positions include 10 to 11 (SH) and A48. E84 is an active-site residue. The chain crosses the membrane as a helical span at residues 192-211 (GALAVVCALLLLVAGTAVAW). Disordered regions lie at residues 231–275 (ATAA…AVAE) and 292–359 (EGIA…EEAV). 2 stretches are compositionally biased toward basic and acidic residues: residues 256–268 (EQQR…EEAR) and 307–359 (AEAR…EEAV). Positions 313-362 (RGVADAEKAKANRAAAEAERQRKIAADEQRKAHEAAAEAERQREEAVKQQ) form a coiled coil. WD repeat units lie at residues 420-459 (GHTA…APRR), 465-504 (SSTA…APRR), 510-549 (GHTD…APRR), 555-594 (DHTA…APRR), 600-639 (GHTA…APRR), 645-684 (GHTA…APRR), and 690-720 (GHTD…CCGM).

The protein localises to the cell membrane. It carries out the reaction NAD(+) + H2O = ADP-D-ribose + nicotinamide + H(+). NAD(+) hydrolase (NADase) that catalyzes cleavage of NAD(+) into ADP-D-ribose (ADPR) and nicotinamide. The sequence is that of NAD(+) hydrolase ApTIR from Actinoplanes sp. (strain ATCC 31044 / CBS 674.73 / SE50/110).